The following is a 353-amino-acid chain: Nicotinate-nucleotide--dimethylbenzimidazole phosphoribosyltransferase (353 aa).

E319 functions as the Proton acceptor in the catalytic mechanism.

The protein belongs to the CobT family.

It catalyses the reaction 5,6-dimethylbenzimidazole + nicotinate beta-D-ribonucleotide = alpha-ribazole 5'-phosphate + nicotinate + H(+). The protein operates within nucleoside biosynthesis; alpha-ribazole biosynthesis; alpha-ribazole from 5,6-dimethylbenzimidazole: step 1/2. Functionally, catalyzes the synthesis of alpha-ribazole-5'-phosphate from nicotinate mononucleotide (NAMN) and 5,6-dimethylbenzimidazole (DMB). The polypeptide is Nicotinate-nucleotide--dimethylbenzimidazole phosphoribosyltransferase (Prosthecochloris aestuarii (strain DSM 271 / SK 413)).